Reading from the N-terminus, the 1102-residue chain is Coiled-coil domain-containing protein AGAP005037 (1102 aa).

Over residues 1–11 (MLIRWKSKDKS) the composition is skewed to basic and acidic residues. Disordered regions lie at residues 1-69 (MLIR…HTLG) and 295-318 (HKSK…RGMY). The span at 12 to 21 (SSSTSSSSST) shows a compositional bias: low complexity. Residues 50-65 (IDDRRRSARSREDPRR) show a composition bias toward basic and acidic residues. The stretch at 405 to 430 (HRIRVEHMERQLANLTGLVQKALTQN) forms a coiled coil. 2 disordered regions span residues 450 to 475 (RNAE…STCH) and 489 to 539 (DIQG…PLVM). Coiled coils occupy residues 554–579 (EVYN…LRRL) and 614–654 (DKER…EVIN). Disordered regions lie at residues 745 to 774 (LPIP…PSPR), 832 to 958 (TKIS…CSDN), and 1031 to 1087 (LCGG…TLPP). Over residues 832 to 849 (TKISQSQLYPSEPVSSNV) the composition is skewed to polar residues. Residues 867–881 (PPQPTRPTTGKPPVP) show a composition bias toward pro residues. The span at 904 to 918 (TSSRSPLASPTSPHV) shows a compositional bias: low complexity. Polar residues predominate over residues 936 to 958 (DCEQQQRTSEGTDSGSESVCSDN).

This Anopheles gambiae (African malaria mosquito) protein is Coiled-coil domain-containing protein AGAP005037.